A 328-amino-acid polypeptide reads, in one-letter code: Cytochrome c biogenesis protein CcsA (328 aa).

The next 8 membrane-spanning stretches (helical) occupy residues 13–33 (ISFS…LVNL), 46–66 (GIVI…IYSG), 73–93 (LYES…VSYF), 101–121 (LNAI…SGLL), 146–166 (MVLG…LLVI), 234–254 (IISL…VWAN), 263–283 (WDPK…YLHI), and 295–315 (AIVA…VNLL).

It belongs to the CcmF/CycK/Ccl1/NrfE/CcsA family. In terms of assembly, may interact with Ccs1.

The protein resides in the plastid. It is found in the chloroplast thylakoid membrane. In terms of biological role, required during biogenesis of c-type cytochromes (cytochrome c6 and cytochrome f) at the step of heme attachment. This Aethionema cordifolium (Lebanon stonecress) protein is Cytochrome c biogenesis protein CcsA.